Reading from the N-terminus, the 266-residue chain is Glutamate racemase (266 aa).

Substrate-binding positions include 7 to 8 (DS) and 39 to 40 (YG). The active-site Proton donor/acceptor is C70. 71–72 (NT) contributes to the substrate binding site. C186 functions as the Proton donor/acceptor in the catalytic mechanism. Substrate is bound at residue 187–188 (TH).

The protein belongs to the aspartate/glutamate racemases family.

The enzyme catalyses L-glutamate = D-glutamate. Its pathway is cell wall biogenesis; peptidoglycan biosynthesis. Functionally, provides the (R)-glutamate required for cell wall biosynthesis. The sequence is that of Glutamate racemase from Campylobacter curvus (strain 525.92).